Reading from the N-terminus, the 46-residue chain is Large ribosomal subunit protein bL34 (46 aa).

This sequence belongs to the bacterial ribosomal protein bL34 family.

In Synechococcus sp. (strain JA-2-3B'a(2-13)) (Cyanobacteria bacterium Yellowstone B-Prime), this protein is Large ribosomal subunit protein bL34.